Consider the following 545-residue polypeptide: Chaperonin GroEL 2 (545 aa).

ATP is bound by residues threonine 30 to proline 33, lysine 51, aspartate 87 to threonine 91, glycine 415, and aspartate 496.

It belongs to the chaperonin (HSP60) family. In terms of assembly, forms a cylinder of 14 subunits composed of two heptameric rings stacked back-to-back. Interacts with the co-chaperonin GroES.

The protein resides in the cytoplasm. It carries out the reaction ATP + H2O + a folded polypeptide = ADP + phosphate + an unfolded polypeptide.. Together with its co-chaperonin GroES, plays an essential role in assisting protein folding. The GroEL-GroES system forms a nano-cage that allows encapsulation of the non-native substrate proteins and provides a physical environment optimized to promote and accelerate protein folding. This Nitrobacter winogradskyi (strain ATCC 25391 / DSM 10237 / CIP 104748 / NCIMB 11846 / Nb-255) protein is Chaperonin GroEL 2.